The chain runs to 366 residues: Chorismate synthase (366 aa).

Residues Arg48 and Arg54 each contribute to the NADP(+) site. Residues 125–127, 237–238, Gly277, 292–296, and Arg318 contribute to the FMN site; these read RSS, NA, and KPTSS.

Belongs to the chorismate synthase family. Homotetramer. FMNH2 is required as a cofactor.

The enzyme catalyses 5-O-(1-carboxyvinyl)-3-phosphoshikimate = chorismate + phosphate. It functions in the pathway metabolic intermediate biosynthesis; chorismate biosynthesis; chorismate from D-erythrose 4-phosphate and phosphoenolpyruvate: step 7/7. Its function is as follows. Catalyzes the anti-1,4-elimination of the C-3 phosphate and the C-6 proR hydrogen from 5-enolpyruvylshikimate-3-phosphate (EPSP) to yield chorismate, which is the branch point compound that serves as the starting substrate for the three terminal pathways of aromatic amino acid biosynthesis. This reaction introduces a second double bond into the aromatic ring system. The polypeptide is Chorismate synthase (Acidovorax ebreus (strain TPSY) (Diaphorobacter sp. (strain TPSY))).